The chain runs to 448 residues: Methylenetetrahydrofolate--tRNA-(uracil-5-)-methyltransferase TrmFO (448 aa).

13-18 (GAGLAG) provides a ligand contact to FAD.

This sequence belongs to the MnmG family. TrmFO subfamily. It depends on FAD as a cofactor.

It is found in the cytoplasm. It carries out the reaction uridine(54) in tRNA + (6R)-5,10-methylene-5,6,7,8-tetrahydrofolate + NADH + H(+) = 5-methyluridine(54) in tRNA + (6S)-5,6,7,8-tetrahydrofolate + NAD(+). The catalysed reaction is uridine(54) in tRNA + (6R)-5,10-methylene-5,6,7,8-tetrahydrofolate + NADPH + H(+) = 5-methyluridine(54) in tRNA + (6S)-5,6,7,8-tetrahydrofolate + NADP(+). In terms of biological role, catalyzes the folate-dependent formation of 5-methyl-uridine at position 54 (M-5-U54) in all tRNAs. The protein is Methylenetetrahydrofolate--tRNA-(uracil-5-)-methyltransferase TrmFO of Streptococcus pyogenes serotype M4 (strain MGAS10750).